Here is a 59-residue protein sequence, read N- to C-terminus: Large ribosomal subunit protein bL32 (59 aa).

Positions 1 to 34 (MAVQKSKVTRSRRGQRRSHDALTGPTLSVDKTTG) are disordered. Over residues 7-16 (KVTRSRRGQR) the composition is skewed to basic residues.

It belongs to the bacterial ribosomal protein bL32 family.

The polypeptide is Large ribosomal subunit protein bL32 (Marinomonas sp. (strain MWYL1)).